We begin with the raw amino-acid sequence, 182 residues long: MKSMLLRDSVKKASQFQRSLHSDPNQAKILLEERRKLLEEANSSADENDSHSMATIKSHFERLKRDEQLLNGVLKKYDAKQEVLSPEELRDAQNFLEMQEANSLDNSIRGTNELLERAYATREDFDYQNSVLGNVTNRINGAAMSIPFINQILRKTSIRRRRDSIILALLISVLMLLFLFFH.

Residues 1–163 (MKSMLLRDSV…RKTSIRRRRD (163 aa)) are Cytoplasmic-facing. Residues 164 to 181 (SIILALLISVLMLLFLFF) form a helical; Anchor for type IV membrane protein membrane-spanning segment. A topological domain (vesicular) is located at residue H182.

The protein belongs to the GOSR1 family. Component of a SNARE complex consisting of sed5, gos1, ykt6, and sft1.

It is found in the golgi apparatus membrane. Nonessential SNARE involved in retrograde transport within the Golgi complex. The polypeptide is Protein transport protein gos1 (gos1) (Schizosaccharomyces pombe (strain 972 / ATCC 24843) (Fission yeast)).